We begin with the raw amino-acid sequence, 354 residues long: MAKLLLLTLLGASLAFVGERLLAFRNSFGAVQELEPVEPQNCVLIEGLENGSEDIDILPSGLAFISSGLKYPGMPNFAPDEPGKIFLIDMNEKNPRAQELEISNGFEKESFNPHGISTFIDKDHTVYLYVVNHPHMKSTVEIFKFEEQQRSLVHLKTIKHELLKSVNNIVVLGPEQFYATRDHYFTNYVLALLEMFLDLHWTSVLFYSPKEVKVVAKGFSSANGITVSLDKKYVYVADATAKNVHVMEKHDNWDLTELKVIHLDTLVDNLSVDPATGDILAGCHPNGMKLLNYNPEDPPGSEVLRIQNVLSEKPRVSTVYTNDGSVLQGSTVASVYQGKILIGTIFHKTLYCVL.

Cys-42 and Cys-352 form a disulfide bridge. The N-linked (GlcNAc...) asparagine glycan is linked to Asn-50. Residues Glu-53 and Asp-54 each contribute to the Ca(2+) site. The active-site Proton acceptor is the His-114. Ile-116 serves as a coordination point for Ca(2+). A Phosphoserine modification is found at Ser-165. Residues Asn-167, Asn-168, Asn-223, Asp-268, and Asn-269 each contribute to the Ca(2+) site. Asn-269 carries N-linked (GlcNAc...) asparagine glycosylation.

It belongs to the paraoxonase family. In terms of assembly, homodimer. Requires Ca(2+) as cofactor. Glycosylated. Post-translationally, the signal sequence is not cleaved.

It is found in the secreted. Its subcellular location is the extracellular space. The enzyme catalyses a phenyl acetate + H2O = a phenol + acetate + H(+). It catalyses the reaction An aryl dialkyl phosphate + H2O = dialkyl phosphate + an aryl alcohol.. The catalysed reaction is an N-acyl-L-homoserine lactone + H2O = an N-acyl-L-homoserine + H(+). In terms of biological role, has low activity towards the organophosphate paraxon and aromatic carboxylic acid esters. Rapidly hydrolyzes lactones such as statin prodrugs (e.g. lovastatin). Hydrolyzes aromatic lactones and 5- or 6-member ring lactones with aliphatic substituents but not simple lactones or those with polar substituents. The protein is Serum paraoxonase/lactonase 3 (PON3) of Oryctolagus cuniculus (Rabbit).